The primary structure comprises 230 residues: uncharacterized protein (230 aa).

The segment covering 1 to 11 has biased composition (polar residues); that stretch reads MPVPSVTVTTD. The tract at residues 1 to 88 is disordered; that stretch reads MPVPSVTVTT…TLKRPTSNSI (88 aa). The span at 63 to 73 shows a compositional bias: basic and acidic residues; sequence DDQHRHSDVHS. Polar residues predominate over residues 79–88; it reads TLKRPTSNSI. A Phosphoserine modification is found at serine 106. A compositionally biased stretch (basic and acidic residues) spans 156 to 179; sequence LKREDSRVSSTKKEHINDHTDMHS. Residues 156–203 are disordered; that stretch reads LKREDSRVSSTKKEHINDHTDMHSTRSKVTTNSQGSSLEPNKLNMAVE. Residues 182-194 are compositionally biased toward polar residues; it reads SKVTTNSQGSSLE.

This is an uncharacterized protein from Saccharomyces cerevisiae (strain ATCC 204508 / S288c) (Baker's yeast).